The primary structure comprises 631 residues: Bromodomain-containing protein 9 (631 aa).

2 disordered regions span residues 1–26 (MGKK…PLEK) and 39–116 (VTEL…TLPK). Basic and acidic residues-rich tracts occupy residues 9–26 (RPEW…PLEK) and 50–63 (SYYD…WERH). Positions 64–73 (KEKKKKKKKK) are enriched in basic residues. Residues 74-85 (SEKEKYADDDER) are compositionally biased toward basic and acidic residues. Residues 86–96 (RRRKEEKKKKR) show a composition bias toward basic residues. The region spanning 166-270 (NEATPHQQLL…HTGFKMMSKQ (105 aa)) is the Bromo domain. The tract at residues 244-246 (VYN) is histone H4K5ac H4K8ac and histone H4K5bu H4K8bu binding. Residues 571–631 (ASVDRVGSRP…SPEPGSTANS (61 aa)) form a disordered region. Low complexity predominate over residues 581-590 (SSNLSSLSNA).

As to quaternary structure, binds acetylated histones H3 and H4. Binds butyrylated histone H4.

It localises to the nucleus. Its function is as follows. Plays a role in chromatin remodeling and regulation of transcription. Acts as a chromatin reader that recognizes and binds acylated histones: binds histones that are acetylated and/or butyrylated. This is Bromodomain-containing protein 9 (brd9) from Danio rerio (Zebrafish).